Consider the following 151-residue polypeptide: 6,7-dimethyl-8-ribityllumazine synthase (151 aa).

5-amino-6-(D-ribitylamino)uracil contacts are provided by residues F18, 49–51 (ALE), and 74–76 (CVI). Residue 79-80 (ET) participates in (2S)-2-hydroxy-3-oxobutyl phosphate binding. The active-site Proton donor is H82. N107 lines the 5-amino-6-(D-ribitylamino)uracil pocket. R121 is a (2S)-2-hydroxy-3-oxobutyl phosphate binding site.

This sequence belongs to the DMRL synthase family.

The catalysed reaction is (2S)-2-hydroxy-3-oxobutyl phosphate + 5-amino-6-(D-ribitylamino)uracil = 6,7-dimethyl-8-(1-D-ribityl)lumazine + phosphate + 2 H2O + H(+). It participates in cofactor biosynthesis; riboflavin biosynthesis; riboflavin from 2-hydroxy-3-oxobutyl phosphate and 5-amino-6-(D-ribitylamino)uracil: step 1/2. Catalyzes the formation of 6,7-dimethyl-8-ribityllumazine by condensation of 5-amino-6-(D-ribitylamino)uracil with 3,4-dihydroxy-2-butanone 4-phosphate. This is the penultimate step in the biosynthesis of riboflavin. This is 6,7-dimethyl-8-ribityllumazine synthase from Bartonella tribocorum (strain CIP 105476 / IBS 506).